Here is a 512-residue protein sequence, read N- to C-terminus: N-acetyltryptophan 6-hydroxylase ivoC (512 aa).

The chain crosses the membrane as a helical span at residues 6–26 (LVFSFPAWALLLVLTLLYTLY). A glycan (N-linked (GlcNAc...) asparagine) is linked at Asn-118. Heme is bound at residue Cys-453.

It belongs to the cytochrome P450 family. Heme serves as cofactor.

The protein resides in the membrane. The protein operates within pigment biosynthesis. Functionally, N-acetyltryptophan 6-hydroxylase; part of the pathway that mediates the biosynthesis of the gray-brown conidiophore pigment. The first step of the pathway is performed by the nonribosomal peptide synthetase ivoA that catalyzes ATP-dependent unidirectional stereoinversion of L-tryptophan to D-tryptophan with complete conversion. While the stereoinversion is catalyzed by the epimerization (E) domain of ivoA, the terminal condensation (C) domain stereoselectively hydrolyzes D-tryptophanyl-S-phosphopantetheine thioester and thus represents a non-canonical C domain function. D-tryptophan is acetylated, probably by an endogenous acetyltransferase. N-acetyltryptophan is further 6-hydroxylated into N-acetyl-6-hydroxytryptophan (AHT) by the cytochrome P450 monooxygenase ivoC. N-acetyl-6-hydroxytryptophan is substrate of the N-acetyl-6-hydroxytryptophan oxidase ivoB to produce the gray-brown conidiophore pigment. The protein is N-acetyltryptophan 6-hydroxylase ivoC of Emericella nidulans (strain FGSC A4 / ATCC 38163 / CBS 112.46 / NRRL 194 / M139) (Aspergillus nidulans).